Reading from the N-terminus, the 125-residue chain is uncharacterized protein (125 aa).

This is an uncharacterized protein from Homo sapiens (Human).